The chain runs to 329 residues: Methionyl-tRNA formyltransferase (329 aa).

112 to 115 is a (6S)-5,6,7,8-tetrahydrofolate binding site; the sequence is SILP.

This sequence belongs to the Fmt family.

It carries out the reaction L-methionyl-tRNA(fMet) + (6R)-10-formyltetrahydrofolate = N-formyl-L-methionyl-tRNA(fMet) + (6S)-5,6,7,8-tetrahydrofolate + H(+). Its function is as follows. Attaches a formyl group to the free amino group of methionyl-tRNA(fMet). The formyl group appears to play a dual role in the initiator identity of N-formylmethionyl-tRNA by promoting its recognition by IF2 and preventing the misappropriation of this tRNA by the elongation apparatus. The chain is Methionyl-tRNA formyltransferase from Shewanella sediminis (strain HAW-EB3).